A 618-amino-acid chain; its full sequence is Protease 4 (618 aa).

The Cytoplasmic portion of the chain corresponds to M1–E24. A helical transmembrane segment spans residues M25–V45. The Periplasmic portion of the chain corresponds to S46–R618. K209 serves as the catalytic Proton donor/acceptor. S409 functions as the Nucleophile in the catalytic mechanism.

The protein belongs to the peptidase S49 family. Homotetramer.

It is found in the cell inner membrane. Inhibited by serine hydrolase inhibitor FP-biotin and by antipain. Digests cleaved signal peptides in vitro, its in vivo function is unknown. This activity is necessary to maintain proper secretion of mature proteins across the membrane. In Escherichia coli (strain K12), this protein is Protease 4 (sppA).